Consider the following 65-residue polypeptide: Large ribosomal subunit protein bL35 (65 aa).

The segment covering 1–15 has biased composition (basic residues); it reads MPKLKTRKAAAKRFR. Positions 1–28 are disordered; sequence MPKLKTRKAAAKRFRQTGTGKFTRRKAN.

It belongs to the bacterial ribosomal protein bL35 family.

The chain is Large ribosomal subunit protein bL35 from Cyanothece sp. (strain PCC 7425 / ATCC 29141).